Here is a 232-residue protein sequence, read N- to C-terminus: 2-C-methyl-D-erythritol 4-phosphate cytidylyltransferase (232 aa).

It belongs to the IspD/TarI cytidylyltransferase family. IspD subfamily.

The catalysed reaction is 2-C-methyl-D-erythritol 4-phosphate + CTP + H(+) = 4-CDP-2-C-methyl-D-erythritol + diphosphate. It functions in the pathway isoprenoid biosynthesis; isopentenyl diphosphate biosynthesis via DXP pathway; isopentenyl diphosphate from 1-deoxy-D-xylulose 5-phosphate: step 2/6. In terms of biological role, catalyzes the formation of 4-diphosphocytidyl-2-C-methyl-D-erythritol from CTP and 2-C-methyl-D-erythritol 4-phosphate (MEP). The polypeptide is 2-C-methyl-D-erythritol 4-phosphate cytidylyltransferase (Neorickettsia sennetsu (strain ATCC VR-367 / Miyayama) (Ehrlichia sennetsu)).